The chain runs to 418 residues: Tryptophan synthase beta chain 1 (418 aa).

N6-(pyridoxal phosphate)lysine is present on Lys99.

Belongs to the TrpB family. Tetramer of two alpha and two beta chains. Requires pyridoxal 5'-phosphate as cofactor.

The catalysed reaction is (1S,2R)-1-C-(indol-3-yl)glycerol 3-phosphate + L-serine = D-glyceraldehyde 3-phosphate + L-tryptophan + H2O. Its pathway is amino-acid biosynthesis; L-tryptophan biosynthesis; L-tryptophan from chorismate: step 5/5. The beta subunit is responsible for the synthesis of L-tryptophan from indole and L-serine. The sequence is that of Tryptophan synthase beta chain 1 (trpB1) from Corynebacterium efficiens (strain DSM 44549 / YS-314 / AJ 12310 / JCM 11189 / NBRC 100395).